The following is a 430-amino-acid chain: Citrate synthase (430 aa).

Active-site residues include histidine 305 and aspartate 363.

The protein belongs to the citrate synthase family. As to quaternary structure, homohexamer.

It catalyses the reaction oxaloacetate + acetyl-CoA + H2O = citrate + CoA + H(+). The protein operates within carbohydrate metabolism; tricarboxylic acid cycle; isocitrate from oxaloacetate: step 1/2. With respect to regulation, allosterically inhibited by NADH. The polypeptide is Citrate synthase (gltA) (Coxiella burnetii (strain RSA 493 / Nine Mile phase I)).